Consider the following 725-residue polypeptide: MDWAINVAHPRLLYKDPKLSVTFIVPSLFHIIIAFVLLGICASDFLCPNVAHISDPNSLRSNGSLVSKTASHASHTGALMAVLLSWCNSSPDLFSNLMSWATSTRETRSTSVSLSIGEVLGACGIILCIVEGSIFIIMSRTHIEISQIQKLSIMRDLLFSLAAMCVMSYVSLMNQVTVLNCLLMAFLYAFYLVVKLTFKLNHSAETPDETAADTSLRENSVSPFLDDSLMASGLLPPIQPGFDISNSITHGIKPSLLSAMDFNSFLSMLENSSLEEDDSRNEMAELNTLRSMTPGQHWSASATVAGEATSAGRPFSEPTNAFTEYRDSERAINSSPAVFAPYRDNPDDEESQEQVLLETTTHGHFGAQEMRRFSKRSLGWIIKIFIPHLSNFSQKSISDAIFSIITVPFFIIFKLSCPQPPSDILSYDPTLNRYSLTTLPIILLFIQSITAPFLLCSILSVLLTYHLGYLVYLFPLILAMALILLLTAFITKVNLHNKFTLSLDSSNILQEKLQKRKLLERLNTSIQIIFLAIGIINIIIWISLLANSLIEMMEIYQKILGLSKAILGLTIFAWGNSVGDLISNISMCRLYKTQTHYQDRVRLATKFFMISCASCLGGVMLNSMGGIGFSGLVSMLFIGAFNDNEWWFLRKVKLQETSQLDNTLNYKFIVSCVFIILQIILLLLFFGGPNNIKRRLTKEMKLVGISMCGLWALATLINILLELFS.

Helical transmembrane passes span 21–41 (VTFIVPSLFHIIIAFVLLGIC), 119–139 (VLGACGIILCIVEGSIFIIMS), 157–177 (LLFSLAAMCVMSYVSLMNQVT), 178–198 (VLNCLLMAFLYAFYLVVKLTF), 397–417 (ISDAIFSIITVPFFIIFKLSC), 439–459 (LPIILLFIQSITAPFLLCSIL), 470–490 (LVYLFPLILAMALILLLTAFI), 526–546 (IQIIFLAIGIINIIIWISLLA), 559–579 (ILGLSKAILGLTIFAWGNSVG), 621–641 (LNSMGGIGFSGLVSMLFIGAF), 668–688 (FIVSCVFIILQIILLLLFFGG), and 704–724 (GISMCGLWALATLINILLELF).

This sequence belongs to the Ca(2+):cation antiporter (CaCA) (TC 2.A.19) family.

It is found in the membrane. The polypeptide is Protein ECM27 (ECM27) (Saccharomyces cerevisiae (strain ATCC 204508 / S288c) (Baker's yeast)).